Reading from the N-terminus, the 352-residue chain is Probable dual-specificity RNA methyltransferase RlmN (352 aa).

Glu93 (proton acceptor) is an active-site residue. One can recognise a Radical SAM core domain in the interval 99 to 332 (TAKRLTVCVS…ATVRQTRGLD (234 aa)). A disulfide bond links Cys106 and Cys337. Residues Cys113, Cys117, and Cys120 each contribute to the [4Fe-4S] cluster site. S-adenosyl-L-methionine contacts are provided by residues 160–161 (GE), Ser190, 213–215 (SLH), and Asn294. The active-site S-methylcysteine intermediate is Cys337.

It belongs to the radical SAM superfamily. RlmN family. Requires [4Fe-4S] cluster as cofactor.

It localises to the cytoplasm. The catalysed reaction is adenosine(2503) in 23S rRNA + 2 reduced [2Fe-2S]-[ferredoxin] + 2 S-adenosyl-L-methionine = 2-methyladenosine(2503) in 23S rRNA + 5'-deoxyadenosine + L-methionine + 2 oxidized [2Fe-2S]-[ferredoxin] + S-adenosyl-L-homocysteine. It carries out the reaction adenosine(37) in tRNA + 2 reduced [2Fe-2S]-[ferredoxin] + 2 S-adenosyl-L-methionine = 2-methyladenosine(37) in tRNA + 5'-deoxyadenosine + L-methionine + 2 oxidized [2Fe-2S]-[ferredoxin] + S-adenosyl-L-homocysteine. Its function is as follows. Specifically methylates position 2 of adenine 2503 in 23S rRNA and position 2 of adenine 37 in tRNAs. This is Probable dual-specificity RNA methyltransferase RlmN from Synechococcus sp. (strain JA-2-3B'a(2-13)) (Cyanobacteria bacterium Yellowstone B-Prime).